The following is an 862-amino-acid chain: Probable disease resistance protein At5g43740 (862 aa).

A coiled-coil region spans residues 24 to 61; that stretch reads RNYIHMMESNLDALQKTMEELKNGRDDLLGRVSIEEDK. The NB-ARC domain occupies 135–438; that stretch reads MVAQEIIHKV…CEGFINPNRY (304 aa). Residue 178 to 185 participates in ATP binding; it reads GMGGVGKT. 4 LRR repeats span residues 511 to 532, 533 to 555, 558 to 580, and 582 to 604; these read IVRTMSFTCTQIKKISCRSKCP, NLSTLLILDNRLLVKISNRFFRF, KLVVLDLSANLDLIKLPEEISNL, and SLQYLNISLTGIKSLPVGLKKLR.

It belongs to the disease resistance NB-LRR family.

Functionally, probable disease resistance protein. The polypeptide is Probable disease resistance protein At5g43740 (Arabidopsis thaliana (Mouse-ear cress)).